Reading from the N-terminus, the 231-residue chain is Dephospho-CoA kinase domain-containing protein (231 aa).

The DPCK domain occupies 3-207; the sequence is LVGLTGGIAS…RSMEYLPLRL (205 aa). Residue 8 to 15 participates in ATP binding; the sequence is GGIASGKS.

The protein belongs to the CoaE family.

The polypeptide is Dephospho-CoA kinase domain-containing protein (Dcakd) (Mus musculus (Mouse)).